We begin with the raw amino-acid sequence, 1400 residues long: RNA polymerase II-associated protein 1 (1400 aa).

4 disordered regions span residues 35–54 (KGSRRRGDAHPDQLPPQDHR), 60–95 (DSLPDLPPALLPAPSKRARPSPGRPLPHDEDPEERL), 161–215 (VSDN…GKGL), and 269–310 (REQT…DKLE). Composition is skewed to basic and acidic residues over residues 39–54 (RRGDAHPDQLPPQDHR) and 85–95 (LPHDEDPEERL). Basic and acidic residues predominate over residues 269–282 (REQTETKATKEQNP). T329 is modified (phosphothreonine). The interval 504–539 (PSHDDKEDEDEDEELTKEKVNRKTPEEGSRPPPDLA) is disordered. Residues 509 to 518 (KEDEDEDEEL) are compositionally biased toward acidic residues. Residues 519-539 (TKEKVNRKTPEEGSRPPPDLA) show a composition bias toward basic and acidic residues.

This sequence belongs to the RPAP1 family. In terms of assembly, part of an RNA polymerase II complex that contains POLR2A, POLR2B, POLR2C, POLR2D, POLR2E, POLR2F, POLR2G, POLR2H, POLR2I, POLR2J, POLR2K, POLR2L, RPAP1, FCP1 plus the general transcription factors TFIIB and TFIIF.

It is found in the nucleus. Functionally, forms an interface between the RNA polymerase II enzyme and chaperone/scaffolding protein, suggesting that it is required to connect RNA polymerase II to regulators of protein complex formation. Required for interaction of the RNA polymerase II complex with acetylated histone H3. This is RNA polymerase II-associated protein 1 (Rpap1) from Rattus norvegicus (Rat).